The primary structure comprises 141 residues: Small ribosomal subunit protein eS17w (141 aa).

This sequence belongs to the eukaryotic ribosomal protein eS17 family.

This Arabidopsis thaliana (Mouse-ear cress) protein is Small ribosomal subunit protein eS17w (RPS17D).